The chain runs to 399 residues: MLAAVMDYFRSCWGPRSPAGHRVRGSDVAGRQDGLLWYKDAGQLVTGEFSMAVVQANNLLEDQSQVESGALSMAEPGPQGTFIGVYDGHGGPETARFINDHMFHHLRRFATEHKCMSTDVIRKAFQATEEGFLSLVSKQWSLKPQIAAVGSCCLVGVICSGTLYVANLGDSRAVLGRFVKSTGEVVATQLSSEHNACYEEVRQELQASHPDDPQIVVLKHNVWRVKGLIQISRSIGDVYLKRPEYNREPLHSKFRLRETFKRPILSSEPAIAVHQIQPNDHFVIFASDGLWEHLSNQEAVDLVQNNPRNGIARRLVKVAMQEAAKKREMRYSDLKKIDRGVRRHFHDDITVIVVFLDSNAISKANWSRGPSVSLRGGGVTLPANSLAPFSTPTVLSSTY.

The PPM-type phosphatase domain maps to 48–356; the sequence is EFSMAVVQAN…DDITVIVVFL (309 aa). Positions 87, 88, 288, and 347 each coordinate Mn(2+).

The protein belongs to the PP2C family. It depends on Mg(2+) as a cofactor. Requires Mn(2+) as cofactor.

It carries out the reaction O-phospho-L-seryl-[protein] + H2O = L-seryl-[protein] + phosphate. It catalyses the reaction O-phospho-L-threonyl-[protein] + H2O = L-threonyl-[protein] + phosphate. In Oryza sativa subsp. japonica (Rice), this protein is Probable protein phosphatase 2C 28.